Here is a 148-residue protein sequence, read N- to C-terminus: Receptor activity-modifying protein 1 (148 aa).

The signal sequence occupies residues methionine 1–alanine 26. 3 disulfides stabilise this stretch: cysteine 27–cysteine 82, cysteine 40–cysteine 72, and cysteine 57–cysteine 104. Residues cysteine 27–isoleucine 118 lie on the Extracellular side of the membrane. The helical transmembrane segment at leucine 119 to arginine 140 threads the bilayer. Over serine 141–valine 148 the chain is Cytoplasmic.

The protein belongs to the RAMP family. As to quaternary structure, heterodimer of CALCRL and RAMP1; the interaction induces allosteric modulation of CALCRL function and CGRP1/CALCA and CGRP2/CALCB ligand specificity. Heterodimer of CALCR and RAMP1; interaction forms the AMYR1 receptor complex for amylin/IAPP and CGRP1/CALCA ligands. In terms of tissue distribution, expressed predominantly in the thymus, skeletal muscle, embryonic and adult brain, embryonic and adult lung, and colon.

The protein resides in the cell membrane. Its function is as follows. Accessory protein that interacts with and modulates the function of G-protein coupled receptors including calcitonin gene-related peptide type 1 receptor (CALCRL) and calcitonin receptor (CALCR). Required for the transport of CALCRL to the plasma membrane. Together with CALCRL, form the receptor complex for the calcitonin gene-related peptides CGRP1/CALCA and CGRP2/CALCB. Together with CALCR, form the AMYR1 receptor complex for amylin/IAPP and CGRP1/CALCA. In Mus musculus (Mouse), this protein is Receptor activity-modifying protein 1.